Consider the following 293-residue polypeptide: AM-toxin biosynthesis protein 14 (293 aa).

Helical transmembrane passes span 33–53 (SATA…EVYI), 73–93 (IAVN…ALVL), 148–168 (GVLA…LCVW), 183–203 (LVPI…LWIL), and 221–241 (VWCL…TPLT).

The protein localises to the membrane. It participates in mycotoxin biosynthesis. Its function is as follows. Part of the gene clusters that mediate the biosynthesis of AM-toxins, host-selective toxins (HSTs) causing Alternaria blotch on apple, a worldwide distributed disease. AM-toxins are cyclic depsipeptides containing the 3 residues 2-hydroxy-isovaleric acid (2-HIV), dehydroalanine, L-alanine which are common for all 3 AM-toxins I to III. The fourth precursor is L-alpha-amino-methoxyphenyl-valeric acid (L-Amv) for AM-toxin I, L-alpha-amino-phenyl-valeric acid (L-Apv) for AM-toxin II, and L-alpha-amino-hydroxyphenyl-valeric acid (L-Ahv) for AM-toxin III. AM-toxins have two target sites for affecting susceptible apple cells; they cause invagination of the plasma membrane and electrolyte loss and chloroplast disorganization. The non-ribosomal peptide synthetase AMT1 contains 4 catalytic modules and is responsible for activation of each residue in AM-toxin. The aldo-keto reductase AMT2 catalyzes the conversion of 2-keto-isovaleric acid (2-KIV) to 2-hydroxy-isovaleric acid (2-HIV), one of the precursor residues incorporated by AMT1 during AM-toxin biosynthesis, by reduction of its ketone to an alcohol. The cytochrome P450 monooxygenase AMT3 and the thioesterase AMT4 are also important for AM-toxin production, but their exact function within the AM-toxin biosynthesis are not known yet. Up to 21 proteins (including AMT1 to AMT4) are predicted to be involved in AM-toxin biosynthesis since their expression ishighly up-regulated in AM-toxin-producing cultures. The chain is AM-toxin biosynthesis protein 14 from Alternaria alternata (Alternaria rot fungus).